Here is a 506-residue protein sequence, read N- to C-terminus: TOM1-like protein 3 (506 aa).

Residues 12 to 141 (ATNDMLIGPD…ELRSAGIEFP (130 aa)) enclose the VHS domain. One can recognise a GAT domain in the interval 180–268 (DASALSMEEI…VLQHHDDKAK (89 aa)). Disordered stretches follow at residues 266-328 (KAKG…PPSS), 351-384 (ETFE…SKSP), and 398-477 (EQLP…PEDI). The span at 288–298 (DDDDDESDDDF) shows a compositional bias: acidic residues. Ser294 carries the post-translational modification Phosphoserine. Polar residues predominate over residues 358–368 (PPSTSQSSNHD). At Ser383 the chain carries Phosphoserine. A compositionally biased stretch (polar residues) spans 450–460 (QSRNLSLNPTA). Positions 468 to 477 (PKKDDKPEDI) are enriched in basic and acidic residues.

Belongs to the TOM1 family. In terms of tissue distribution, preferentially expressed in cauline leaves.

The protein localises to the membrane. In terms of biological role, might contribute to the loading of the ESCRT machinery. The sequence is that of TOM1-like protein 3 from Arabidopsis thaliana (Mouse-ear cress).